A 716-amino-acid chain; its full sequence is MIYQSPTIQVELLEDNIAKLCFNAPGSVNKFDRETLASLDAALDSIKQDSNIKALVLTSSKDTFIVGADITEFLGLFAQDDAVLLSWVEQANAVFNKLEDLPFPTASAIKGFALGGGCETILTTDFRIADTTAKIGLPETKLGIIPGFGGTVRLPRVIGADNALEWITTGKDQRAEDALKVGAVDAVVAPQALEAAAIQMLKDAVAEKLDWQARRNRKLSALTLPKLEAMMSFTTAKGMVFAVAGKHYPAPMAAVSVIEQASTKGRAEALQIEHQAFIKLAKTDVAKALIGIFLNDQFVKGKAKKAGKLAKEVNNAAVLGAGIMGGGIAYQSASKGTPIVMKDIAQPALDLGLNEAAKLLSAQVARGRSTPEKMAKVLNNITPSLDYAAIKHSDVVVEAVVEHPKIKAQVLAEVEGYVSEDAIIASNTSTISINLLAKSMKKPERFCGMHFFNPVHKMPLVEVIRGEHSSEETIASVVAYASKMGKTPIVVNDCPGFFVNRVLFPYFAGFNGLLAEGGDFAAIDKVMEKQFGWPMGPAYLLDVVGLDTGHHAQAVMAEGFPDRMGKSGTDAIDVMFENKRLGQKNGKGFYVYSVDSRGKPKKDVDPTSYGLLKDAFGELKAFEADDIIARTMIPMIIETVRCLEEGIVASPAEADMGLVYGLGFPPFRGGVFRYLDTMGVANFVALADKYAHLGGLYQVTDAMRTLAANNGSYYQA.

The enoyl-CoA hydratase/isomerase stretch occupies residues 1–189 (MIYQSPTIQV…KVGAVDAVVA (189 aa)). Position 296 (aspartate 296) interacts with substrate. The tract at residues 311-716 (KEVNNAAVLG…AANNGSYYQA (406 aa)) is 3-hydroxyacyl-CoA dehydrogenase. Residues methionine 324, aspartate 343, 400–402 (VVE), lysine 407, and serine 429 contribute to the NAD(+) site. The For 3-hydroxyacyl-CoA dehydrogenase activity role is filled by histidine 450. NAD(+) is bound at residue asparagine 453. Residues asparagine 500 and tyrosine 660 each coordinate substrate.

This sequence in the N-terminal section; belongs to the enoyl-CoA hydratase/isomerase family. In the C-terminal section; belongs to the 3-hydroxyacyl-CoA dehydrogenase family. In terms of assembly, heterotetramer of two alpha chains (FadB) and two beta chains (FadA).

It catalyses the reaction a (3S)-3-hydroxyacyl-CoA + NAD(+) = a 3-oxoacyl-CoA + NADH + H(+). It carries out the reaction a (3S)-3-hydroxyacyl-CoA = a (2E)-enoyl-CoA + H2O. The catalysed reaction is a 4-saturated-(3S)-3-hydroxyacyl-CoA = a (3E)-enoyl-CoA + H2O. The enzyme catalyses (3S)-3-hydroxybutanoyl-CoA = (3R)-3-hydroxybutanoyl-CoA. It catalyses the reaction a (3Z)-enoyl-CoA = a 4-saturated (2E)-enoyl-CoA. It carries out the reaction a (3E)-enoyl-CoA = a 4-saturated (2E)-enoyl-CoA. It participates in lipid metabolism; fatty acid beta-oxidation. In terms of biological role, involved in the aerobic and anaerobic degradation of long-chain fatty acids via beta-oxidation cycle. Catalyzes the formation of 3-oxoacyl-CoA from enoyl-CoA via L-3-hydroxyacyl-CoA. It can also use D-3-hydroxyacyl-CoA and cis-3-enoyl-CoA as substrate. The polypeptide is Fatty acid oxidation complex subunit alpha (Shewanella baltica (strain OS223)).